The sequence spans 235 residues: Acyl-protein thioesterase 1 (235 aa).

Catalysis depends on charge relay system residues serine 125, aspartate 181, and histidine 213.

The protein belongs to the AB hydrolase superfamily. AB hydrolase 2 family.

The protein localises to the cytoplasm. It localises to the nucleus. The catalysed reaction is S-hexadecanoyl-L-cysteinyl-[protein] + H2O = L-cysteinyl-[protein] + hexadecanoate + H(+). Functionally, hydrolyzes fatty acids from S-acylated cysteine residues in proteins with a strong preference for palmitoylated G-alpha proteins over other acyl substrates. Mediates the deacylation of G-alpha proteins such as GPA1 in vivo, but has weak or no activity toward palmitoylated Ras proteins. Has weak lysophospholipase activity in vitro; however such activity may not exist in vivo. This Gibberella zeae (strain ATCC MYA-4620 / CBS 123657 / FGSC 9075 / NRRL 31084 / PH-1) (Wheat head blight fungus) protein is Acyl-protein thioesterase 1.